The following is a 1158-amino-acid chain: ATP-dependent helicase/deoxyribonuclease subunit B (1158 aa).

It belongs to the helicase family. AddB/RexB type 2 subfamily. In terms of assembly, heterodimer of AddA and RexB. It depends on Mg(2+) as a cofactor.

Functionally, the heterodimer acts as both an ATP-dependent DNA helicase and an ATP-dependent, dual-direction single-stranded exonuclease. Recognizes the chi site generating a DNA molecule suitable for the initiation of homologous recombination. This subunit has 5' -&gt; 3' nuclease activity but not helicase activity. This Lactobacillus gasseri (strain ATCC 33323 / DSM 20243 / BCRC 14619 / CIP 102991 / JCM 1131 / KCTC 3163 / NCIMB 11718 / NCTC 13722 / AM63) protein is ATP-dependent helicase/deoxyribonuclease subunit B.